Consider the following 357-residue polypeptide: Inositol-tetrakisphosphate 1-kinase 3 (357 aa).

Positions 56 and 98 each coordinate 1D-myo-inositol 1,3,4-trisphosphate. Residues Arg133 and Lys183 each contribute to the ATP site. 1D-myo-inositol 1,3,4-trisphosphate is bound by residues His190 and Lys222. ATP-binding positions include 211–222 (QEFVNHGGVLFK), Ser237, and Ser262. Asp302, Asp317, and Asn319 together coordinate Mg(2+). Asn319 contacts 1D-myo-inositol 1,3,4-trisphosphate.

This sequence belongs to the ITPK1 family. As to quaternary structure, monomer. Requires Mg(2+) as cofactor.

It catalyses the reaction 1D-myo-inositol 3,4,5,6-tetrakisphosphate + ATP = 1D-myo-inositol 1,3,4,5,6-pentakisphosphate + ADP + H(+). The catalysed reaction is 1D-myo-inositol 1,3,4-trisphosphate + ATP = 1D-myo-inositol 1,3,4,5-tetrakisphosphate + ADP + H(+). The enzyme catalyses 1D-myo-inositol 1,3,4-trisphosphate + ATP = 1D-myo-inositol 1,3,4,6-tetrakisphosphate + ADP + H(+). Functionally, kinase that can phosphorylate various inositol polyphosphate such as Ins(3,4,5,6)P4 or Ins(1,3,4)P3 and participates in phytic acid biosynthesis in developing seeds. Phytic acid is the primary storage form of phosphorus in cereal grains and other plant seeds. This chain is Inositol-tetrakisphosphate 1-kinase 3 (ITPK3), found in Oryza sativa subsp. indica (Rice).